Consider the following 578-residue polypeptide: Sulfite reductase [NADPH] hemoprotein beta-component (578 aa).

The [4Fe-4S] cluster site is built by cysteine 441, cysteine 447, cysteine 487, and cysteine 491. Cysteine 491 serves as a coordination point for siroheme.

The protein belongs to the nitrite and sulfite reductase 4Fe-4S domain family. As to quaternary structure, alpha(8)-beta(8). The alpha component is a flavoprotein, the beta component is a hemoprotein. Siroheme is required as a cofactor. Requires [4Fe-4S] cluster as cofactor.

The enzyme catalyses hydrogen sulfide + 3 NADP(+) + 3 H2O = sulfite + 3 NADPH + 4 H(+). Its pathway is sulfur metabolism; hydrogen sulfide biosynthesis; hydrogen sulfide from sulfite (NADPH route): step 1/1. Functionally, component of the sulfite reductase complex that catalyzes the 6-electron reduction of sulfite to sulfide. This is one of several activities required for the biosynthesis of L-cysteine from sulfate. This chain is Sulfite reductase [NADPH] hemoprotein beta-component, found in Vibrio vulnificus (strain YJ016).